The chain runs to 389 residues: S-adenosylmethionine synthase (389 aa).

H17 contacts ATP. D19 lines the Mg(2+) pocket. A K(+)-binding site is contributed by E45. Residues E58 and Q101 each contribute to the L-methionine site. The flexible loop stretch occupies residues 101–111 (QSPDIAQGVNP). ATP-binding positions include 168–170 (DGK), 234–235 (RF), D243, 249–250 (RK), and K270. D243 lines the L-methionine pocket. K274 is a binding site for L-methionine.

The protein belongs to the AdoMet synthase family. Homotetramer; dimer of dimers. It depends on Mg(2+) as a cofactor. K(+) serves as cofactor.

The protein resides in the cytoplasm. It carries out the reaction L-methionine + ATP + H2O = S-adenosyl-L-methionine + phosphate + diphosphate. Its pathway is amino-acid biosynthesis; S-adenosyl-L-methionine biosynthesis; S-adenosyl-L-methionine from L-methionine: step 1/1. Functionally, catalyzes the formation of S-adenosylmethionine (AdoMet) from methionine and ATP. The overall synthetic reaction is composed of two sequential steps, AdoMet formation and the subsequent tripolyphosphate hydrolysis which occurs prior to release of AdoMet from the enzyme. This chain is S-adenosylmethionine synthase, found in Syntrophobacter fumaroxidans (strain DSM 10017 / MPOB).